A 676-amino-acid chain; its full sequence is RNA helicase NPH-II (676 aa).

The region spanning F172 to H347 is the Helicase ATP-binding domain. ATP is bound at residue G185 to T192. The DEXH box motif lies at D296 to H299. The 170-residue stretch at N366–N535 folds into the Helicase C-terminal domain.

Belongs to the DEAD box helicase family. DEAH subfamily. Monomer.

The protein resides in the virion. The enzyme catalyses ATP + H2O = ADP + phosphate + H(+). NTP-dependent helicase that catalyzes unidirectional unwinding of 3'tailed duplex RNAs and plays an important role during transcription of early mRNAs, presumably by preventing R-loop formation behind the elongating RNA polymerase. Might also play a role in the export of newly synthesized mRNA chains out of the core into the cytoplasm. Required for replication and propagation of viral particles. This chain is RNA helicase NPH-II (OPG084), found in Bos taurus (Bovine).